Here is a 283-residue protein sequence, read N- to C-terminus: MMTHWPSPAKLNLFLYITGQRADGYHTLQTLFQFLDYGDTLHIEPRHDGEIHLLTPVNGVENEDNLIVRAARLLMKVASESGRLPAGSGADISIEKRLPMGGGLGGGSSNAATVLVALNHLWQCGLSIDELATLGLTLGADVPVFVRGHAAFAEGVGEILTPVNPPEKWYLVAPPGVSLPTPVIFKDPQLPRNTPKRSIDTLLKCEFSNDCEVIARKRFREVDAALSWLLEYAPSRLTGTGACVFAEFDTESCARQVLEQAPEWLNAFVAKGVNLSPLHRELL.

Residue Lys-10 is part of the active site. 99–109 (PMGGGLGGGSS) contributes to the ATP binding site. Asp-141 is an active-site residue.

This sequence belongs to the GHMP kinase family. IspE subfamily. As to quaternary structure, homodimer.

It catalyses the reaction 4-CDP-2-C-methyl-D-erythritol + ATP = 4-CDP-2-C-methyl-D-erythritol 2-phosphate + ADP + H(+). The protein operates within isoprenoid biosynthesis; isopentenyl diphosphate biosynthesis via DXP pathway; isopentenyl diphosphate from 1-deoxy-D-xylulose 5-phosphate: step 3/6. Its function is as follows. Catalyzes the phosphorylation of the position 2 hydroxy group of 4-diphosphocytidyl-2C-methyl-D-erythritol. The sequence is that of 4-diphosphocytidyl-2-C-methyl-D-erythritol kinase from Salmonella choleraesuis (strain SC-B67).